The chain runs to 153 residues: ATP synthase subunit a (153 aa).

The next 2 helical transmembrane spans lie at Ala-43 to Phe-63 and Ile-104 to Ile-124.

The protein belongs to the ATPase A chain family. In terms of assembly, F-type ATPases have 2 components, CF(1) - the catalytic core - and CF(0) - the membrane proton channel. CF(1) has five subunits: alpha(3), beta(3), gamma(1), delta(1), epsilon(1). CF(0) has three main subunits: a(1), b(2) and c(9-12). The alpha and beta chains form an alternating ring which encloses part of the gamma chain. CF(1) is attached to CF(0) by a central stalk formed by the gamma and epsilon chains, while a peripheral stalk is formed by the delta and b chains.

It is found in the cell inner membrane. In terms of biological role, key component of the proton channel; it plays a direct role in the translocation of protons across the membrane. This is ATP synthase subunit a (atpB) from Pseudomonas putida (Arthrobacter siderocapsulatus).